The following is a 1511-amino-acid chain: Bifunctional glutamate/proline--tRNA ligase (1511 aa).

Positions 164–758 are glutamate--tRNA ligase; it reads GTKWDVSENK…SSVLYNRVAA (595 aa). The short motif at 204–214 is the 'HIGH' region element; that stretch reads PEASGYLHIGH. The segment at 296–315 is disordered; that stretch reads AEQMKAEREQRAESKHRQNS. Residues 299–315 show a composition bias toward basic and acidic residues; it reads MKAEREQRAESKHRQNS. The residue at position 300 (lysine 300) is an N6-acetyllysine; alternate. Lysine 300 carries the post-translational modification N6-malonyllysine; alternate. A Phosphothreonine modification is found at threonine 355. Lysine 417 bears the N6-acetyllysine mark. Residues 432–436 carry the 'KMSKS' region motif; sequence VLSKR. Residue serine 434 is modified to Phosphoserine. 4 positions are modified to N6-acetyllysine: lysine 498, lysine 535, lysine 542, and lysine 637. The span at 708 to 728 shows a compositional bias: basic and acidic residues; it reads KEMPTSGSKEKTKAEPLKKET. The disordered stretch occupies residues 708–741; the sequence is KEMPTSGSKEKTKAEPLKKETSSAPKEGPVPAVS. Position 746 is a phosphoserine (serine 746). Residues 748–804 form the WHEP-TRS 1 domain; the sequence is ESSVLYNRVAAQGDVVRELKAKKAAKEDVDAAVKQLLALKAEYKQKTGQEYKPGNPP. The 3 X 57 AA approximate repeats stretch occupies residues 759-955; the sequence is QGDVVRELKA…GIEYKPVSAT (197 aa). Lysine 787 is subject to N6-acetyllysine. The segment at 794–823 is disordered; that stretch reads TGQEYKPGNPPSAAAQSASTKSLPSAGEDR. Over residues 807–816 the composition is skewed to polar residues; it reads AAQSASTKSL. Positions 821–877 constitute a WHEP-TRS 2 domain; it reads EDRSLYDKIAAQGEVVRKLKAEKAPKAKVTEAVECLLSLKAEYKEKTGKEYVPGQPP. Residue lysine 860 is modified to N6-acetyllysine. Disordered regions lie at residues 868–903 and 952–1015; these read GKEY…AKAL and VSAT…RLGL. A Phosphotyrosine modification is found at tyrosine 871. Low complexity predominate over residues 877-890; it reads PASQKSQPSPASKA. Serine 885 carries the phosphoserine; by CDK5 modification. At threonine 897 the chain carries Phosphothreonine. A WHEP-TRS 3 domain is found at 899–955; the sequence is EAKALFDRVACQGEVVRKLKAEKASKDQVDPAVQELLQLKAQYKSLTGIEYKPVSAT. The segment covering 957–975 has biased composition (basic and acidic residues); that stretch reads SEDKDKKKKEKENKSEKQN. The segment covering 992–1005 has biased composition (gly residues); the sequence is QGGGLSSSGAGEGQ. A Phosphoserine modification is found at serine 997. Position 998 is a phosphoserine; by RPS6KB1 (serine 998). Serine 999 is modified (phosphoserine). The tract at residues 1006-1511 is proline--tRNA ligase; the sequence is GPKKQTRLGL…KFYTLFGRSY (506 aa). L-proline contacts are provided by residues 1120–1122 and arginine 1151; that span reads TSE. Arginine 1151, glutamate 1153, arginine 1162, threonine 1163, glutamine 1236, and threonine 1239 together coordinate ATP. Arginine 1151 is subject to Omega-N-methylarginine. Glutamine 1236 is a binding site for Mg(2+). Histidine 1241 contacts L-proline. ATP contacts are provided by threonine 1275 and arginine 1277. A Phosphoserine modification is found at serine 1349. Positions 1447, 1452, 1494, and 1496 each coordinate Zn(2+). The residue at position 1502 (lysine 1502) is an N6-acetyllysine.

In the N-terminal section; belongs to the class-I aminoacyl-tRNA synthetase family. Glutamate--tRNA ligase type 2 subfamily. It in the C-terminal section; belongs to the class-II aminoacyl-tRNA synthetase family. As to quaternary structure, homodimer. Part of the aminoacyl-tRNA synthetase multienzyme complex, also know as multisynthetase complex, that is composed of the tRNA ligases for Arg (RARS1), Asp (DARS1), Gln (QARS1), Ile (IARS1), Leu (LARS1), Lys (KARS1), Met (MARS1) the bifunctional ligase for Glu and Pro (EPRS1) and the auxiliary subunits AIMP1/p43, AIMP2/p38 and EEF1E1/p18. Forms a linear complex that contains MARS1, EEF1E1, EPRS1 and AIMP2 that is at the core of the multisubunit complex. Interacts with TARS3. Interacts with DUS2L. Component of the GAIT complex which is composed of EPRS1, RPL13A and GAPDH. Interacts (phosphorylated at Ser-998) with SLC27A1; mediates the translocation of SLC27A1 from the cytoplasm to the plasma membrane thereby increasing the uptake of long-chain fatty acids. Post-translationally, phosphorylated at Ser-998 by RPS6KB1; triggers EPRS1 release from the aminoacyl-tRNA synthetase multienzyme complex. In monocytes, the IFN-gamma-induced phosphorylation at Ser-998 releases EPRS1 from the aminoacyl-tRNA synthetase multienzyme complex, allowing its association with the GAIT complex. Phosphorylation at Ser-998 is specifically required for the RPL13A-mediated interaction of the GAIT complex with eIF4G. Phosphorylation at Ser-998 by RPS6KB1, is also induced by insulin through activation of the mTORC1 signaling pathway and promotes the interaction of EPRS1 with SLC27A1.

Its subcellular location is the cytoplasm. It is found in the cytosol. It localises to the membrane. The catalysed reaction is tRNA(Glu) + L-glutamate + ATP = L-glutamyl-tRNA(Glu) + AMP + diphosphate. The enzyme catalyses tRNA(Pro) + L-proline + ATP = L-prolyl-tRNA(Pro) + AMP + diphosphate. Its function is as follows. Multifunctional protein which primarily functions within the aminoacyl-tRNA synthetase multienzyme complex, also known as multisynthetase complex. Within the complex it catalyzes the attachment of both L-glutamate and L-proline to their cognate tRNAs in a two-step reaction where the amino acid is first activated by ATP to form a covalent intermediate with AMP. Subsequently, the activated amino acid is transferred to the acceptor end of the cognate tRNA to form L-glutamyl-tRNA(Glu) and L-prolyl-tRNA(Pro). Upon interferon-gamma stimulation, EPRS1 undergoes phosphorylation, causing its dissociation from the aminoacyl-tRNA synthetase multienzyme complex. It is recruited to form the GAIT complex, which binds to stem loop-containing GAIT elements found in the 3'-UTR of various inflammatory mRNAs, such as ceruloplasmin. The GAIT complex inhibits the translation of these mRNAs, allowing interferon-gamma to redirect the function of EPRS1 from protein synthesis to translation inhibition in specific cell contexts. Furthermore, it can function as a downstream effector in the mTORC1 signaling pathway, by promoting the translocation of SLC27A1 from the cytoplasm to the plasma membrane where it mediates the uptake of long-chain fatty acid by adipocytes. Thereby, EPRS1 also plays a role in fat metabolism and more indirectly influences lifespan. This chain is Bifunctional glutamate/proline--tRNA ligase, found in Cricetulus griseus (Chinese hamster).